A 350-amino-acid polypeptide reads, in one-letter code: S-adenosylmethionine:tRNA ribosyltransferase-isomerase (350 aa).

It belongs to the QueA family. Monomer.

It localises to the cytoplasm. It catalyses the reaction 7-aminomethyl-7-carbaguanosine(34) in tRNA + S-adenosyl-L-methionine = epoxyqueuosine(34) in tRNA + adenine + L-methionine + 2 H(+). The protein operates within tRNA modification; tRNA-queuosine biosynthesis. Its function is as follows. Transfers and isomerizes the ribose moiety from AdoMet to the 7-aminomethyl group of 7-deazaguanine (preQ1-tRNA) to give epoxyqueuosine (oQ-tRNA). This is S-adenosylmethionine:tRNA ribosyltransferase-isomerase from Bacillus cereus (strain Q1).